Here is a 290-residue protein sequence, read N- to C-terminus: Agroclavine dehydrogenase (290 aa).

This sequence belongs to the fgaFS/easG family. In terms of assembly, monomer.

The catalysed reaction is agroclavine + NADP(+) = didehydroagroclavine + NADPH + H(+). Its pathway is alkaloid biosynthesis; ergot alkaloid biosynthesis. Functionally, agroclavine dehydrogenase; part of the gene cluster that mediates the biosynthesis of fungal ergot alkaloid. DmaW catalyzes the first step of ergot alkaloid biosynthesis by condensing dimethylallyl diphosphate (DMAP) and tryptophan to form 4-dimethylallyl-L-tryptophan. The second step is catalyzed by the methyltransferase easF that methylates 4-dimethylallyl-L-tryptophan in the presence of S-adenosyl-L-methionine, resulting in the formation of 4-dimethylallyl-L-abrine. The catalase easC and the FAD-dependent oxidoreductase easE then transform 4-dimethylallyl-L-abrine to chanoclavine-I which is further oxidized by easD in the presence of NAD(+), resulting in the formation of chanoclavine-I aldehyde. Agroclavine dehydrogenase easG then mediates the conversion of chanoclavine-I aldehyde to agroclavine via a non-enzymatic adduct reaction: the substrate is an iminium intermediate that is formed spontaneously from chanoclavine-I aldehyde in the presence of glutathione. The presence of easA is not required to complete this reaction. Further conversion of agroclavine to paspalic acid is a two-step process involving oxidation of agroclavine to elymoclavine and of elymoclavine to paspalic acid, the second step being performed by the elymoclavine oxidase cloA. Paspalic acid is then further converted to D-lysergic acid. Ergopeptines are assembled from D-lysergic acid and three different amino acids by the D-lysergyl-peptide-synthetases composed each of a monomudular and a trimodular nonribosomal peptide synthetase subunit. LpsB and lpsC encode the monomodular subunits responsible for D-lysergic acid activation and incorporation into the ergopeptine backbone. LpsA1 and A2 subunits encode the trimodular nonribosomal peptide synthetase assembling the tripeptide portion of ergopeptines. LpsA1 is responsible for formation of the major ergopeptine, ergotamine, and lpsA2 for alpha-ergocryptine, the minor ergopeptine of the total alkaloid mixture elaborated by C.purpurea. D-lysergyl-tripeptides are assembled by the nonribosomal peptide synthetases and released as N-(D-lysergyl-aminoacyl)-lactams. Cyclolization of the D-lysergyl-tripeptides is performed by the Fe(2+)/2-ketoglutarate-dependent dioxygenase easH which introduces a hydroxyl group into N-(D-lysergyl-aminoacyl)-lactam at alpha-C of the aminoacyl residue followed by spontaneous condensation with the terminal lactam carbonyl group. This is Agroclavine dehydrogenase from Claviceps purpurea (Ergot fungus).